A 301-amino-acid chain; its full sequence is Tegument protein VP22 (301 aa).

The disordered stretch occupies residues 1–171; it reads MTSRRSVKSG…PTRSKTPAQG (171 aa). Low complexity predominate over residues 113-124; that stretch reads RTPTTAPRAPRT. The Nuclear localization signal motif lies at 163-166; the sequence is TRSK. Residues 174 to 267 are interaction with gE; the sequence is RKLHFSTAPP…LVNPDVVQDV (94 aa). Residues 232 to 244 carry the Nuclear export signal motif; sequence LNELLGITTIRVT. Residues 269–281 are compositionally biased toward low complexity; sequence AATATRGRSAASR. Residues 269–301 form a disordered region; that stretch reads AATATRGRSAASRPTERPRAPARSASRPRRPVE.

This sequence belongs to the alphaherpesvirinae VP22 tegument protein family. In terms of assembly, interacts with gE (via C-terminus); this interaction is necessary for the recruitment of VP22 to the Golgi and its packaging into virions. Interacts with gM (via C-terminus). Interacts with VP16; this interaction allows the formation of a tripartite complex composed of VP16, VP22 and UL41/VHS. According to a report interacts with gD (via C-terminus). According another publication, does not interact with gD. Interacts with host CGAS. Interacts with host SET; this interaction may interfere with SET-mediated nucleosomal deposition onto the viral genome. Interacts with the capsid-binding protein UL16. Highly phosphorylated in the host cell. Packaging is selective for underphosphorylated forms.

It localises to the virion tegument. The protein localises to the host cytoplasm. Its subcellular location is the host nucleus. It is found in the host Golgi apparatus. Tegument protein that plays different roles during the time course of infection. Participates in both the accumulation of viral mRNAs and viral protein translation at late time of infection. Modulates the RNase activity of the virion host shutoff protein UL41 probably to ensure necessary levels of key cellular mRNAs and proteins. Plays a role in microtubule reorganization that occurs after viral infection by stabilizing microtubule network. Finally, may prevent nucleosomal deposition onto the viral genome by interacting with and inhibiting host SET. Plays a role in the inhibition of host innate immune system by targeting the CGAS enzymatic activity which is the principal cytosolic DNA sensor that detects invading viral DNA. Acts by mediating disruption of liquid-like droplets in which CGAS is activated, thereby preventing CGAS activity. The polypeptide is Tegument protein VP22 (Human herpesvirus 1 (strain 17) (HHV-1)).